We begin with the raw amino-acid sequence, 1001 residues long: Phosphoenolpyruvate carboxylase (1001 aa).

Residues His-189 and Lys-642 contribute to the active site.

Belongs to the PEPCase type 1 family. The cofactor is Mg(2+).

The catalysed reaction is oxaloacetate + phosphate = phosphoenolpyruvate + hydrogencarbonate. Its function is as follows. Forms oxaloacetate, a four-carbon dicarboxylic acid source for the tricarboxylic acid cycle. This is Phosphoenolpyruvate carboxylase from Prochlorococcus marinus (strain SARG / CCMP1375 / SS120).